The primary structure comprises 662 residues: Transketolase (662 aa).

H28 contacts substrate. Residues H68 and 115 to 117 contribute to the thiamine diphosphate site; that span reads GPL. D156 serves as a coordination point for Mg(2+). Thiamine diphosphate is bound by residues G157 and N186. Mg(2+)-binding residues include N186 and I188. Residues H261, R356, and S383 each contribute to the substrate site. H261 contacts thiamine diphosphate. E410 acts as the Proton donor in catalysis. Residue F436 coordinates thiamine diphosphate. Substrate-binding residues include H460, D468, and R519.

This sequence belongs to the transketolase family. In terms of assembly, homodimer. Mg(2+) is required as a cofactor. The cofactor is Ca(2+). Requires Mn(2+) as cofactor. It depends on Co(2+) as a cofactor. Thiamine diphosphate serves as cofactor.

It catalyses the reaction D-sedoheptulose 7-phosphate + D-glyceraldehyde 3-phosphate = aldehydo-D-ribose 5-phosphate + D-xylulose 5-phosphate. It functions in the pathway carbohydrate biosynthesis; Calvin cycle. It participates in carbohydrate degradation; pentose phosphate pathway. Catalyzes the transfer of a two-carbon ketol group from a ketose donor to an aldose acceptor, via a covalent intermediate with the cofactor thiamine pyrophosphate. The sequence is that of Transketolase (tkt) from Staphylococcus aureus (strain MRSA252).